Consider the following 544-residue polypeptide: Tyrosine-protein kinase Yes (544 aa).

Gly2 carries N-myristoyl glycine lipidation. In terms of domain architecture, SH3 spans 92–153; that stretch reads GGVTFFVALY…PSNYVAPADS (62 aa). Positions 159–256 constitute an SH2 domain; the sequence is WYFGKLSRKD…GLCYKLTTVC (98 aa). Residues 278-531 enclose the Protein kinase domain; that stretch reads LRLDVRLGQG…YIQSFLEDYF (254 aa). Residues 284-292 and Lys306 contribute to the ATP site; that span reads LGQGCFGEV. Asp397 (proton acceptor) is an active-site residue. Tyr427 is modified (phosphotyrosine; by autocatalysis).

This sequence belongs to the protein kinase superfamily. Tyr protein kinase family. SRC subfamily.

The catalysed reaction is L-tyrosyl-[protein] + ATP = O-phospho-L-tyrosyl-[protein] + ADP + H(+). The sequence is that of Tyrosine-protein kinase Yes (yes) from Xiphophorus hellerii (Green swordtail).